A 452-amino-acid polypeptide reads, in one-letter code: Prenyltransferase fsdK (452 aa).

Belongs to the tryptophan dimethylallyltransferase family.

It functions in the pathway mycotoxin biosynthesis. Functionally, prenyltransferase; part of the gene cluster that mediates the biosynthesis of fusaridione A, a bright yellow trans-fused decalin-containing tetramic acid with antimicrobial activity. The PKS module of fsdS catalyzes the formation of the polyketide unit which is then conjugated to L-tyrosine by the condensation domain of the fsdS NRPS module. Activity of the Dieckmann cyclase domain (RED) results in release of the intermediate fusaridione A. The unstable pyrrolidinedione ring of fusaridione A is opened through a reverse-Dieckmann reaction to afford its ring-opened form. The chain is Prenyltransferase fsdK from Fusarium heterosporum.